The following is a 365-amino-acid chain: LVPLFVFILFLHKCFFTTSNNNKKLPPSPRKLPIIGNLHQLGLHPHRSLHKLSKKYGPVMLLHLGSKPVIVASSVEAVRDIMKTNDLVWSNRPKSKMADRLIYGSKDVSFSPHGEYWRQIRSITVLHLLSNKRVQSYRAAREEETSNMIEKLKQMSNSSSSATDLRDLFCWLAYNIINRVALGKKYNDEIDAKATLDKFVELLGTFNVGDYIPCLEWVNKITGFDSKVDKVAKDLDTFLEFVIEAHMIRNEKEENRAGESKDLVDVLLEIQNGKETGFPIQRDSLKALLLDPFSAGTDTIYTVLEWTMTELLRHPRAMEKLQNEVQGLAQEKAEITEDDLPNMHYLKAVIKETLRLHPPIPLLLP.

This sequence belongs to the cytochrome P450 family. The cofactor is heme.

Functionally, may have a role in maturation, such as during flavor formation or other metabolite production specific to aging tissues. This Solanum melongena (Eggplant) protein is Cytochrome P450 71A3 (CYP71A3).